The following is a 389-amino-acid chain: PqqA peptide cyclase (389 aa).

The region spanning V19 to A234 is the Radical SAM core domain. Residues C33, C37, and C40 each coordinate [4Fe-4S] cluster.

This sequence belongs to the radical SAM superfamily. PqqE family. Interacts with PqqD. The interaction is necessary for activity of PqqE. Requires [4Fe-4S] cluster as cofactor.

It carries out the reaction [PQQ precursor protein] + S-adenosyl-L-methionine = E-Y cross-linked-[PQQ precursor protein] + 5'-deoxyadenosine + L-methionine + H(+). It functions in the pathway cofactor biosynthesis; pyrroloquinoline quinone biosynthesis. In terms of biological role, catalyzes the cross-linking of a glutamate residue and a tyrosine residue in the PqqA protein as part of the biosynthesis of pyrroloquinoline quinone (PQQ). The protein is PqqA peptide cyclase of Pseudomonas syringae pv. tomato (strain ATCC BAA-871 / DC3000).